Reading from the N-terminus, the 234-residue chain is Phosphoribosylaminoimidazole-succinocarboxamide synthase (234 aa).

Belongs to the SAICAR synthetase family.

It carries out the reaction 5-amino-1-(5-phospho-D-ribosyl)imidazole-4-carboxylate + L-aspartate + ATP = (2S)-2-[5-amino-1-(5-phospho-beta-D-ribosyl)imidazole-4-carboxamido]succinate + ADP + phosphate + 2 H(+). It participates in purine metabolism; IMP biosynthesis via de novo pathway; 5-amino-1-(5-phospho-D-ribosyl)imidazole-4-carboxamide from 5-amino-1-(5-phospho-D-ribosyl)imidazole-4-carboxylate: step 1/2. The polypeptide is Phosphoribosylaminoimidazole-succinocarboxamide synthase (Streptococcus pyogenes serotype M3 (strain ATCC BAA-595 / MGAS315)).